Here is a 560-residue protein sequence, read N- to C-terminus: NAD-dependent malic enzyme (560 aa).

The Proton donor role is filled by tyrosine 100. Arginine 153 is an NAD(+) binding site. Lysine 171 acts as the Proton acceptor in catalysis. Residues glutamate 242, aspartate 243, and aspartate 266 each contribute to the a divalent metal cation site. NAD(+)-binding residues include aspartate 266 and asparagine 413.

Belongs to the malic enzymes family. In terms of assembly, homotetramer. Mg(2+) is required as a cofactor. It depends on Mn(2+) as a cofactor.

It carries out the reaction (S)-malate + NAD(+) = pyruvate + CO2 + NADH. It catalyses the reaction oxaloacetate + H(+) = pyruvate + CO2. This Psychrobacter cryohalolentis (strain ATCC BAA-1226 / DSM 17306 / VKM B-2378 / K5) protein is NAD-dependent malic enzyme.